Consider the following 810-residue polypeptide: Calpain-3 (810 aa).

The segment covering 9–27 has biased composition (low complexity); it reads VAQQTAAGSVPSTTSTTTE. A disordered region spans residues 9-31; it reads VAQQTAAGSVPSTTSTTTEGTGG. Positions 68 to 410 constitute a Calpain catalytic domain; that stretch reads LYEDPDFPPN…FTKLEICNLT (343 aa). Active-site residues include cysteine 123, histidine 327, and asparagine 351. Residues 411 to 579 form a domain III region; that stretch reads PDTLEADKLQ…KRSLSEEVEN (169 aa). A disordered region spans residues 578–639; that stretch reads ENMIEADRPS…SAKAREKSEE (62 aa). The linker stretch occupies residues 580 to 638; sequence MIEADRPSKKKKGKPIIFVSDRANSNKELTTDEDAGKDGEKTHVDEKKRSSAKAREKSE. Residues 613–639 show a composition bias toward basic and acidic residues; it reads DAGKDGEKTHVDEKKRSSAKAREKSEE. EF-hand domains lie at 638-672, 681-714, 711-746, and 776-810; these read EEET…VVKK, FELE…DKIK, DKIK…AGFR, and VRLD…TMYA. Residues 639 to 809 form a domain IV region; it reads EETQFRNIFR…VLEWLQLTMY (171 aa). The Ca(2+) site is built by alanine 651, aspartate 654, glutamate 656, glutamate 661, aspartate 694, aspartate 696, serine 698, lysine 700, glutamate 705, aspartate 724, aspartate 726, serine 728, threonine 730, glutamate 735, aspartate 789, aspartate 791, aspartate 793, and isoleucine 795.

It belongs to the peptidase C2 family. Homodimer; via EF-hand domain 4. Interacts with TTN/titin. Interacts with CMYA5; this interaction, which results in CMYA5 proteolysis, may protect CAPN3 from autolysis. Interacts with SIMC1. Interacts with UTP25; the interaction is required for CAPN3 translocation to the nucleolus. In terms of tissue distribution, skeletal muscle. Low levels in spleen, intestine and bone.

It is found in the cytoplasm. The protein resides in the nucleus. Its subcellular location is the nucleolus. It carries out the reaction Broad endopeptidase activity.. With respect to regulation, activated by micromolar concentrations of calcium and inhibited by calpastatin. Functionally, calcium-regulated non-lysosomal thiol-protease. Proteolytically cleaves CTBP1. Mediates, with UTP25, the proteasome-independent degradation of p53/TP53. The sequence is that of Calpain-3 (CAPN3) from Gallus gallus (Chicken).